The sequence spans 299 residues: Large ribosomal subunit protein eL22 (299 aa).

Disordered regions lie at residues 1 to 142 (MAPT…AAPA) and 155 to 178 (VAKP…KKNV). 2 stretches are compositionally biased toward basic and acidic residues: residues 33–42 (GKVEKPKAEA) and 55–64 (KASEAAKDVK). Low complexity-rich tracts occupy residues 65 to 98 (AAAA…AAAA) and 105 to 142 (AAAA…AAPA).

The protein belongs to the eukaryotic ribosomal protein eL22 family.

In Drosophila melanogaster (Fruit fly), this protein is Large ribosomal subunit protein eL22 (RpL22).